The chain runs to 125 residues: Small ribosomal subunit protein uS12m (125 aa).

2 disordered regions span residues 1-29 and 105-125; these read MPTK…QCPQ and LGIP…PKSK. A compositionally biased stretch (basic and acidic residues) spans 10–23; sequence HGREEKQRTDRTRA.

Belongs to the universal ribosomal protein uS12 family.

The protein localises to the mitochondrion. In terms of biological role, protein S12 is involved in the translation initiation step. In Oryza sativa subsp. japonica (Rice), this protein is Small ribosomal subunit protein uS12m (RPS12).